A 158-amino-acid polypeptide reads, in one-letter code: Hypoxanthine DNA glycosylase (158 aa).

Asn39 is an active-site residue.

It belongs to the uracil-DNA glycosylase (UDG) superfamily. Type 6 (HDG) family.

Functionally, excises hypoxanthine, a deamination product of adenine, from double-stranded DNA. Acts on double-stranded DNA containing G/I, T/I, A/I and C/I base pairs, but not on single-stranded inosine-containing DNA. Also has minor xanthine DNA glycosylase activity. Lacks any detectable uracil-DNA glycosylase activity. This chain is Hypoxanthine DNA glycosylase, found in Methanosarcina barkeri (strain Fusaro / DSM 804).